Consider the following 368-residue polypeptide: Carbamoyl phosphate synthase small chain (368 aa).

Positions 1 to 178 are CPSase; the sequence is MKAVLGLEDG…GAAGAWKGSG (178 aa). Positions 45, 230, and 232 each coordinate L-glutamine. In terms of domain architecture, Glutamine amidotransferase type-1 spans 182–368; it reads HAVVVDLGIK…KVVKVLGGGL (187 aa). Cys257 (nucleophile) is an active-site residue. L-glutamine is bound by residues Phe258, Gln261, Asn299, Gly301, and Tyr302. Catalysis depends on residues His342 and Glu344.

Belongs to the CarA family. As to quaternary structure, composed of two chains; the small (or glutamine) chain promotes the hydrolysis of glutamine to ammonia, which is used by the large (or ammonia) chain to synthesize carbamoyl phosphate. Tetramer of heterodimers (alpha,beta)4.

It carries out the reaction hydrogencarbonate + L-glutamine + 2 ATP + H2O = carbamoyl phosphate + L-glutamate + 2 ADP + phosphate + 2 H(+). The catalysed reaction is L-glutamine + H2O = L-glutamate + NH4(+). It participates in amino-acid biosynthesis; L-arginine biosynthesis; carbamoyl phosphate from bicarbonate: step 1/1. It functions in the pathway pyrimidine metabolism; UMP biosynthesis via de novo pathway; (S)-dihydroorotate from bicarbonate: step 1/3. Its function is as follows. Small subunit of the glutamine-dependent carbamoyl phosphate synthetase (CPSase). CPSase catalyzes the formation of carbamoyl phosphate from the ammonia moiety of glutamine, carbonate, and phosphate donated by ATP, constituting the first step of 2 biosynthetic pathways, one leading to arginine and/or urea and the other to pyrimidine nucleotides. The small subunit (glutamine amidotransferase) binds and cleaves glutamine to supply the large subunit with the substrate ammonia. This Methanosarcina mazei (strain ATCC BAA-159 / DSM 3647 / Goe1 / Go1 / JCM 11833 / OCM 88) (Methanosarcina frisia) protein is Carbamoyl phosphate synthase small chain.